We begin with the raw amino-acid sequence, 676 residues long: Long-chain-fatty-acid--CoA ligase 1 (676 aa).

Residue 246–257 (YTSGSTGLPKGV) participates in ATP binding. The FACS signature appears at 511–560 (DGWFRTGDVGELTPEGLLRIIDRKKNLVKTQNGEYIALEKLESRYRTSSL).

The protein belongs to the ATP-dependent AMP-binding enzyme family. Requires Mg(2+) as cofactor.

It carries out the reaction a long-chain fatty acid + ATP + CoA = a long-chain fatty acyl-CoA + AMP + diphosphate. Functionally, esterification, concomitant with transport, of exogenous long-chain fatty acids into metabolically active CoA thioesters for subsequent degradation or incorporation into phospholipids. It may supplement intracellular myristoyl-CoA pools from exogenous myristate. Preferentially acts on C12:0-C16:0 fatty acids with myristic and pentadecanic acid (C15:0) having the highest activities. Appears to play a role in the maintenance of cell viability during stationary phase. The chain is Long-chain-fatty-acid--CoA ligase 1 (lcf1) from Schizosaccharomyces pombe (strain 972 / ATCC 24843) (Fission yeast).